We begin with the raw amino-acid sequence, 223 residues long: uncharacterized protein (223 aa).

A Tyr recombinase domain is found at 29–220 (KQTYKMFKED…AKEILKNIGD (192 aa)). Active-site residues include R71, K103, H170, R173, and H196. Residue Y205 is the O-(3'-phospho-DNA)-tyrosine intermediate of the active site.

This sequence belongs to the 'phage' integrase family.

This is an uncharacterized protein from Methanocaldococcus jannaschii (strain ATCC 43067 / DSM 2661 / JAL-1 / JCM 10045 / NBRC 100440) (Methanococcus jannaschii).